The chain runs to 155 residues: Endoribonuclease YbeY (155 aa).

His-113, His-117, and His-123 together coordinate Zn(2+).

The protein belongs to the endoribonuclease YbeY family. Zn(2+) serves as cofactor.

The protein localises to the cytoplasm. Single strand-specific metallo-endoribonuclease involved in late-stage 70S ribosome quality control and in maturation of the 3' terminus of the 16S rRNA. The protein is Endoribonuclease YbeY of Ureaplasma urealyticum serovar 10 (strain ATCC 33699 / Western).